Consider the following 189-residue polypeptide: Glucose-6-phosphate isomerase (189 aa).

Fe cation contacts are provided by H88, H90, E97, and H136.

The protein belongs to the archaeal-type GPI family. In terms of assembly, homodimer.

The protein resides in the cytoplasm. It catalyses the reaction alpha-D-glucose 6-phosphate = beta-D-fructose 6-phosphate. The protein operates within carbohydrate degradation; glycolysis; D-glyceraldehyde 3-phosphate and glycerone phosphate from D-glucose: step 2/4. In Thermococcus gammatolerans (strain DSM 15229 / JCM 11827 / EJ3), this protein is Glucose-6-phosphate isomerase.